The chain runs to 101 residues: ATP synthase subunit c (101 aa).

2 helical membrane-spanning segments follow: residues 31–51 (AFAY…GAGQ) and 81–101 (AISE…IFVG).

The protein belongs to the ATPase C chain family. As to quaternary structure, F-type ATPases have 2 components, F(1) - the catalytic core - and F(0) - the membrane proton channel. F(1) has five subunits: alpha(3), beta(3), gamma(1), delta(1), epsilon(1). F(0) has three main subunits: a(1), b(2) and c(10-14). The alpha and beta chains form an alternating ring which encloses part of the gamma chain. F(1) is attached to F(0) by a central stalk formed by the gamma and epsilon chains, while a peripheral stalk is formed by the delta and b chains.

The protein resides in the cell membrane. F(1)F(0) ATP synthase produces ATP from ADP in the presence of a proton or sodium gradient. F-type ATPases consist of two structural domains, F(1) containing the extramembraneous catalytic core and F(0) containing the membrane proton channel, linked together by a central stalk and a peripheral stalk. During catalysis, ATP synthesis in the catalytic domain of F(1) is coupled via a rotary mechanism of the central stalk subunits to proton translocation. Functionally, key component of the F(0) channel; it plays a direct role in translocation across the membrane. A homomeric c-ring of between 10-14 subunits forms the central stalk rotor element with the F(1) delta and epsilon subunits. The sequence is that of ATP synthase subunit c from Mesomycoplasma hyopneumoniae (strain 232) (Mycoplasma hyopneumoniae).